The primary structure comprises 725 residues: Gamma-tubulin complex component 5 (725 aa).

The tract at residues 222 to 246 (TENEEKMSDNASASSGSDQGPSSRQ) is disordered. The segment covering 232 to 244 (ASASSGSDQGPSS) has biased composition (low complexity).

Belongs to the TUBGCP family. In terms of assembly, component of the gamma-tubulin ring complex (gTuRC) consisting of TUBGCP2, TUBGCP3, TUBGCP4, TUBGCP5 and TUBGCP6 and gamma-tubulin TUBG1 or TUBG2. TUBGCP2, TUBGCP3, TUBGCP4, TUBGCP5 and TUBGCP6 assemble in a 5:5:2:1:1 stoichiometry; each is associated with a gamma-tubulin, thereby arranging 14 gamma-tubulins in a helical manner. Gamma-tubulin at the first position is blocked by TUBGCP3 at the last position, allowing 13 protafilaments to grow into a microtubule. The gTuRC (via TUBGCP3 and TUBGCP6) interacts with ACTB and MZT1; the interactions form a luminal bridge that stabilizes the initial structure during complex assembly. The gTuRC (via TUBGCP2) interacts with MZT2A/MZT2B and CDK5RAP2 (via CM1 motif); the interactions play a role in gTuRC activation.

The protein localises to the cytoplasm. It is found in the cytoskeleton. Its subcellular location is the microtubule organizing center. It localises to the centrosome. In terms of biological role, component of the gamma-tubulin ring complex (gTuRC) which mediates microtubule nucleation. The gTuRC regulates the minus-end nucleation of alpha-beta tubulin heterodimers that grow into microtubule protafilaments, a critical step in centrosome duplication and spindle formation. The sequence is that of Gamma-tubulin complex component 5 (TUBGCP5) from Macaca fascicularis (Crab-eating macaque).